Reading from the N-terminus, the 59-residue chain is ATP synthase subunit J, mitochondrial (59 aa).

A helical transmembrane segment spans residues 9–25 (ILKVYWPFFVAGAAVYY).

The protein belongs to the ATPase j subunit family. F-type ATPases have 2 components, CF(1) - the catalytic core - and CF(0) - the membrane proton channel. In yeast, the dimeric form of ATP synthase consists of 17 polypeptides: alpha, beta, gamma, delta, epsilon, 4 (B), 5 (OSCP), 6 (A), 8, 9 (C), d, E (Tim11), f, g, h, i/j and k.

It is found in the mitochondrion membrane. Its function is as follows. Mitochondrial membrane ATP synthase (F(1)F(0) ATP synthase or Complex V) produces ATP from ADP in the presence of a proton gradient across the membrane which is generated by electron transport complexes of the respiratory chain. F-type ATPases consist of two structural domains, F(1) - containing the extramembraneous catalytic core and F(0) - containing the membrane proton channel, linked together by a central stalk and a peripheral stalk. During catalysis, ATP synthesis in the catalytic domain of F(1) is coupled via a rotary mechanism of the central stalk subunits to proton translocation. Part of the complex F(0) domain. Minor subunit located with subunit a in the membrane. The polypeptide is ATP synthase subunit J, mitochondrial (ATP18) (Saccharomyces cerevisiae (strain ATCC 204508 / S288c) (Baker's yeast)).